The following is a 200-amino-acid chain: Adenylate kinase (200 aa).

10–15 (GAGKGT) lines the ATP pocket. An NMP region spans residues 30-59 (STGDMLRAAVAAETPVGLEAKAIMESGGLV). Residues Thr31, Arg36, 57 to 59 (GLV), 85 to 88 (GFPR), and Gln92 contribute to the AMP site. The LID stretch occupies residues 126-142 (KRAEETAARGQPVRKDD). Position 127 (Arg127) interacts with ATP. Arg139 and Arg150 together coordinate AMP. Lys178 provides a ligand contact to ATP.

Belongs to the adenylate kinase family. Monomer.

The protein localises to the cytoplasm. It carries out the reaction AMP + ATP = 2 ADP. The protein operates within purine metabolism; AMP biosynthesis via salvage pathway; AMP from ADP: step 1/1. Its function is as follows. Catalyzes the reversible transfer of the terminal phosphate group between ATP and AMP. Plays an important role in cellular energy homeostasis and in adenine nucleotide metabolism. The protein is Adenylate kinase of Methylorubrum extorquens (strain CM4 / NCIMB 13688) (Methylobacterium extorquens).